Here is a 619-residue protein sequence, read N- to C-terminus: Sodium-coupled monocarboxylate transporter 2 (619 aa).

Residues 1 to 9 (MRVKNFEAW) lie on the Extracellular side of the membrane. A helical transmembrane segment spans residues 10 to 30 (DYVVFAGLFVISSGIGVFFAI). Over 31 to 47 (KERKKTTSREFLVGGRQ) the chain is Cytoplasmic. Residues 48-68 (MSFGPVALSLTASFMSAVTVL) traverse the membrane as a helical segment. Topologically, residues 69 to 80 (GTPAEVYRFGAS) are extracellular. The chain crosses the membrane as a helical span at residues 81–101 (FFLFLISYVFVVFFTSELFLP). The Cytoplasmic portion of the chain corresponds to 102-128 (VFYRSGITSTYEYLQLRFNKPVRYAAT). The chain crosses the membrane as a helical span at residues 129–149 (IIYIVQTILYTGVVVYAPALA). Over 150–157 (LNQVTGFN) the chain is Extracellular. The helical transmembrane segment at 158–178 (LWASVFATGIVCTFYCSLGGL) threads the bilayer. Topologically, residues 179 to 180 (KA) are cytoplasmic. A helical transmembrane segment spans residues 181 to 201 (VVWTDAFQMVVMIVGFLTVLI). The Extracellular segment spans residues 202-235 (QGSNHVGGFNNVLEKAGNGSRLHIVDFDVDPLRR). Residue Asn-219 is glycosylated (N-linked (GlcNAc...) asparagine). The helical transmembrane segment at 236 to 256 (HTFWTITIGGTFTWLGVYGVN) threads the bilayer. Residues 257–275 (QSTIQRCISCKTEKHAKLA) are Cytoplasmic-facing. A helical transmembrane segment spans residues 276-296 (LYFNLLGLWIIVACAVFSGLI). The Extracellular segment spans residues 297-321 (MYSHFKDCDPWTSGVISAPDQLMPY). Residues 322-342 (FVMEIFATMPGLPGLFVACAF) form a helical membrane-spanning segment. The Cytoplasmic segment spans residues 343–385 (SGTLSTVAASINALATVTFEDFVKSCFPHLSDKLSTWISKGLC). Residues 386–406 (ILFGIMCTSMAVVASLMGSVV) form a helical membrane-spanning segment. Topologically, residues 407–411 (QAALS) are extracellular. The helical transmembrane segment at 412-432 (IHGMCGGPMLGLFTLGLVFPF) threads the bilayer. Over 433-437 (VNWKG) the chain is Cytoplasmic. A helical membrane pass occupies residues 438-458 (ALGGLLTGITLSFWVAIGSFI). Topologically, residues 459-504 (YPAPESKTLPLPLSTEHCVELNITTTVAPQISSRPVLADTWYSLSY) are extracellular. N-linked (GlcNAc...) asparagine glycosylation is present at Asn-480. A helical membrane pass occupies residues 505 to 525 (LYFSAVGCLGCIAAGIIISFL). The Cytoplasmic portion of the chain corresponds to 526-619 (TGKQRGKDID…NSVPEKTTYF (94 aa)).

It belongs to the sodium:solute symporter (SSF) (TC 2.A.21) family. As to expression, expressed in the cortical region of the kidney corresponding to the proximal tubule. Expressed in Mueller cells of the inner retina (at protein level). Isoform 1 is expressed in the retina, kidney, small intestine and skeletal muscle. Isoform 2 is not detected in the kidney, small intestine and skeletal muscle. In the kidney, expressed predominantly in tubular epithelial cells of the cortical region and in the convoluted portions of the proximal tubule (pars convoluta). In the small intestine, its expression is highest in the proximal part and gradually decreased towards the distal end. Expressed in the neural retina. Not detected in the caecum and colon.

Its subcellular location is the apical cell membrane. The catalysed reaction is (S)-lactate(out) + Na(+)(out) = (S)-lactate(in) + Na(+)(in). It catalyses the reaction nicotinate(out) + Na(+)(out) = nicotinate(in) + Na(+)(in). The enzyme catalyses pyruvate(out) + Na(+)(out) = pyruvate(in) + Na(+)(in). It carries out the reaction propanoate(out) + Na(+)(out) = propanoate(in) + Na(+)(in). The catalysed reaction is butanoate(out) + Na(+)(out) = butanoate(in) + Na(+)(in). It catalyses the reaction acetoacetate(out) + Na(+)(out) = acetoacetate(in) + Na(+)(in). Acts as an electroneutral and low-affinity sodium (Na(+))-dependent sodium-coupled solute transporter. Catalyzes the transport across the plasma membrane of many monocarboxylates such as lactate, pyruvate, nicotinate, propionate, butyrate and beta-D-hydroxybutyrate. May be responsible for the first step of reabsorption of monocarboxylates from the lumen of the proximal tubule of the kidney and the small intestine. May play also a role in monocarboxylates transport in the retina. Mediates electroneutral uptake of lactate, with a stoichiometry of 2 Na(+) for each lactate. This is Sodium-coupled monocarboxylate transporter 2 (Slc5a12) from Mus musculus (Mouse).